The primary structure comprises 1167 residues: Tight junction protein 2 (1167 aa).

Residues 10 to 97 form the PDZ 1 domain; sequence TVTLQKDSKR…IAAIVVKRPR (88 aa). 10 positions are modified to phosphoserine: Ser107, Ser127, Ser130, Ser140, Ser145, Ser147, Ser173, Ser194, Ser205, and Ser239. Residues 129 to 195 are disordered; that stretch reads RSGYSERSRH…SRERSRGRSL (67 aa). A disordered region spans residues 225–286; the sequence is SYHEAYEPDY…KGQHDPDRPI (62 aa). Positions 242-262 are enriched in basic and acidic residues; sequence YDRRAHPETRYERSRSREHLR. The PDZ 2 domain maps to 287 to 365; sequence GVLLTKSKAN…KLQLVVLRDS (79 aa). Phosphoserine is present on residues Ser305, Ser378, Ser380, Ser386, Ser395, Ser404, Ser410, and Ser411. Positions 381-485 are disordered; it reads EVEDISEIES…LRPSPEDEAI (105 aa). Residues 395 to 426 are compositionally biased toward basic and acidic residues; sequence SPEERRQQYSDQDYHSSTEKLKERPSSREETS. Thr435 bears the Phosphothreonine mark. At Ser479 the chain carries Phosphoserine. The PDZ 3 domain occupies 489 to 570; that stretch reads NTKMVRFKKG…GETVTILAQS (82 aa). Position 554 is a phosphotyrosine (Tyr554). Positions 584–649 constitute an SH3 domain; it reads GDSFFIRSHF…PNKSRAEQMA (66 aa). A Guanylate kinase-like domain is found at 660–858; sequence GDRADFWRMR…WFGSLKDSIQ (199 aa). Phosphoserine is present on residues Ser684 and Ser884. Phosphothreonine is present on Thr887. Residues Ser895 and Ser902 each carry the phosphoserine modification. Disordered stretches follow at residues 904–1055 and 1095–1167; these read FEDT…PRSV and YAVP…DTEL. Phosphothreonine is present on residues Thr907 and Thr915. Over residues 938–949 the composition is skewed to basic and acidic residues; that stretch reads VQHEENIRKSSP. A phosphoserine mark is found at Ser948, Ser960, Ser968, Ser988, and Ser1044. The span at 976–990 shows a compositional bias: basic and acidic residues; that stretch reads EPPKARSQNREDSFD. Residues 1037–1049 show a composition bias toward acidic residues; the sequence is ESEEVGESTEEQE. Residue Tyr1095 is modified to Phosphotyrosine. Phosphoserine is present on residues Ser1124 and Ser1136. Positions 1165–1167 are interaction with SCRIB; it reads TEL.

The protein belongs to the MAGUK family. As to quaternary structure, homodimer. Interacts (via PDZ2 domain) with TJP1/ZO1 (via PDZ2 domain). Interacts with UBN1. Interacts with SCRIB. Interacts with OCLN. Interacts with SAFB in the nucleus. Interacts with USP53 (via the C-terminal region). Interacts with claudins, including CLDN1, CLDN2, CLDN3, CLDN5 and CLDN7. Interacts with CLDN18. Interacts (via N-terminus) with CTNNA1.

Its subcellular location is the cell junction. It localises to the adherens junction. It is found in the cell membrane. The protein localises to the nucleus. The protein resides in the tight junction. Plays a role in tight junctions and adherens junctions. Acts as a positive regulator of RANKL-induced osteoclast differentiation, potentially via mediating downstream transcriptional activity. This chain is Tight junction protein 2, found in Mus musculus (Mouse).